The chain runs to 61 residues: Small ribosomal subunit protein uS14 (61 aa).

Zn(2+) contacts are provided by cysteine 24, cysteine 27, cysteine 40, and cysteine 43.

Belongs to the universal ribosomal protein uS14 family. Zinc-binding uS14 subfamily. Part of the 30S ribosomal subunit. Contacts proteins S3 and S10. Requires Zn(2+) as cofactor.

Binds 16S rRNA, required for the assembly of 30S particles and may also be responsible for determining the conformation of the 16S rRNA at the A site. The polypeptide is Small ribosomal subunit protein uS14 (Leptospira biflexa serovar Patoc (strain Patoc 1 / Ames)).